The following is a 600-amino-acid chain: ATP-dependent lipid A-core flippase (600 aa).

Helical transmembrane passes span 26-46, 82-102, 167-187, and 266-286; these read VGIF…QPML, LLIV…NYFL, VFLF…MLAI, and PMLQ…VLFL. The 292-residue stretch at 30–321 folds into the ABC transmembrane type-1 domain; sequence LLSIIGFVIF…LSEVSSTIQK (292 aa). The 237-residue stretch at 353–589 folds into the ABC transporter domain; it reads LEVKNLSFFY…NGYYARLHAM (237 aa). An ATP-binding site is contributed by 387-394; that stretch reads GRSGSGKS.

The protein belongs to the ABC transporter superfamily. Lipid exporter (TC 3.A.1.106) family. As to quaternary structure, homodimer.

It localises to the cell inner membrane. The enzyme catalyses ATP + H2O + lipid A-core oligosaccharideSide 1 = ADP + phosphate + lipid A-core oligosaccharideSide 2.. Its function is as follows. Involved in lipopolysaccharide (LPS) biosynthesis. Translocates lipid A-core from the inner to the outer leaflet of the inner membrane. Transmembrane domains (TMD) form a pore in the inner membrane and the ATP-binding domain (NBD) is responsible for energy generation. The protein is ATP-dependent lipid A-core flippase of Pseudomonas syringae pv. syringae (strain B728a).